The sequence spans 396 residues: Beta-1,3-N-acetylglucosaminyltransferase radical fringe (396 aa).

Residues Met-1–Leu-6 lie on the Cytoplasmic side of the membrane. A helical; Signal-anchor for type II membrane protein membrane pass occupies residues Gly-7–Ile-27. Over Pro-28–Arg-396 the chain is Lumenal. N-linked (GlcNAc...) asparagine glycans are attached at residues Asn-49 and Asn-120. A substrate-binding site is contributed by Arg-145. Asn-184 carries N-linked (GlcNAc...) asparagine glycosylation. 2 cysteine pairs are disulfide-bonded: Cys-185/Cys-196 and Cys-214/Cys-277. A substrate-binding site is contributed by Asp-218. Asp-219 serves as a coordination point for Mn(2+). Asp-307 is an active-site residue. His-331 provides a ligand contact to Mn(2+). Cys-381 and Cys-390 are disulfide-bonded.

This sequence belongs to the glycosyltransferase 31 family. Requires Mn(2+) as cofactor. Detected in the mesanchymal region of the developing limb. Expressed in mesoderm but not in ectoderm with no evident boundary of expression.

The protein localises to the golgi apparatus membrane. It carries out the reaction 3-O-(alpha-L-fucosyl)-L-threonyl-[EGF-like domain protein] + UDP-N-acetyl-alpha-D-glucosamine = 3-O-(N-acetyl-beta-D-glucosaminyl-(1-&gt;3)-alpha-L-fucosyl)-L-threonyl-[EGF-like domain protein] + UDP + H(+). The catalysed reaction is 3-O-(alpha-L-fucosyl)-L-seryl-[EGF-like domain protein] + UDP-N-acetyl-alpha-D-glucosamine = 3-O-(N-acetyl-beta-D-glucosaminyl-(1-&gt;3)-alpha-L-fucosyl)-L-seryl-[EGF-like domain protein] + UDP + H(+). Glycosyltransferase that initiates the elongation of O-linked fucose residues attached to EGF-like repeats in the extracellular domain of Notch molecules. Involved in forelimb development and in adult forelimb regeneration. This chain is Beta-1,3-N-acetylglucosaminyltransferase radical fringe (RFNG), found in Notophthalmus viridescens (Eastern newt).